Consider the following 72-residue polypeptide: Translation initiation factor IF-1 (72 aa).

Residues 1-72 (MAKEDVIEVE…TRGRITYRYK (72 aa)) form the S1-like domain. Tyrosine 60 carries the post-translational modification Phosphotyrosine.

The protein belongs to the IF-1 family. Component of the 30S ribosomal translation pre-initiation complex which assembles on the 30S ribosome in the order IF-2 and IF-3, IF-1 and N-formylmethionyl-tRNA(fMet); mRNA recruitment can occur at any time during PIC assembly.

Its subcellular location is the cytoplasm. Its function is as follows. One of the essential components for the initiation of protein synthesis. Stabilizes the binding of IF-2 and IF-3 on the 30S subunit to which N-formylmethionyl-tRNA(fMet) subsequently binds. Helps modulate mRNA selection, yielding the 30S pre-initiation complex (PIC). Upon addition of the 50S ribosomal subunit IF-1, IF-2 and IF-3 are released leaving the mature 70S translation initiation complex. This Shouchella clausii (strain KSM-K16) (Alkalihalobacillus clausii) protein is Translation initiation factor IF-1.